Consider the following 890-residue polypeptide: UPF0182 protein SYNW1212 (890 aa).

8 consecutive transmembrane segments (helical) span residues 21–41 (WLLQ…AIRW), 64–84 (LTLL…NGLI), 98–118 (WQVS…LVAV), 134–154 (AVVL…SIPL), 173–193 (FAAL…CLGN), 219–239 (RLLM…CWLS), 268–288 (LLTV…SLLL), and 295–315 (VLAV…WLIL).

It belongs to the UPF0182 family.

The protein resides in the cell membrane. This is UPF0182 protein SYNW1212 from Parasynechococcus marenigrum (strain WH8102).